The chain runs to 867 residues: cGMP-dependent 3',5'-cGMP phosphodiesterase A (867 aa).

Residues 121-146 (IINSSSSTTDTSKTSPIKKQTSSSSP) show a composition bias toward low complexity. 2 disordered regions span residues 121-167 (IINS…SQQQ) and 180-241 (HHHH…STFP). The segment covering 147-160 (PLSPQQQQPPPPLV) has biased composition (pro residues). Over residues 191–220 (NDNNNNTTTNNNNIEILEQQQQQQQQQQQQ) the composition is skewed to low complexity. The segment covering 221 to 232 (QDEDSTDVDEEF) has biased composition (acidic residues). Residues 357-503 (STTGFVLWIN…GDTCYDPNRI (147 aa)) are phosphodiesterase activity. The a divalent metal cation site is built by H399, H401, and D403. Residues 607–721 (IFRS…WEMR) and 734–851 (VFSR…IFVD) each bind a nucleoside 3',5'-cyclic phosphate.

This sequence belongs to the metallo-beta-lactamase superfamily. cNMP phosphodiesterase family. Mn(2+) is required as a cofactor. Mg(2+) serves as cofactor. Requires Zn(2+) as cofactor.

The protein resides in the cytoplasm. The protein localises to the cytosol. It catalyses the reaction 3',5'-cyclic GMP + H2O = GMP + H(+). In terms of biological role, phosphodiesterase specific for cGMP, which is activated by cGMP but not by cAMP. Involved in the degradation of intracellular cGMP, contributes to the control of cGMP signals. The sequence is that of cGMP-dependent 3',5'-cGMP phosphodiesterase A (pdeD) from Dictyostelium discoideum (Social amoeba).